The following is a 240-amino-acid chain: MRCCGVCAFDAARGPRRLMRVGLALILVGHVNLLVGAVLHGTVLRHVANPRGAVTPEYTTANVISVGSGLLSVSVGLVALLASRNLLRPRLHWALLTLALVNLLLSAACSMGLLLAVSLTVANGGRRLIADCHPGLMDPSIPLDQGPGHTDCSFDPTRIYDTALALWIPSLFMSAAEAALSGYCCVAALTLRGIGPCRKEGLQEQLQELTELELPECKRQENVQLLHGRQDFQALQKTWV.

4 consecutive transmembrane segments (helical) span residues 21–41 (VGLALILVGHVNLLVGAVLHG), 63–83 (VISVGSGLLSVSVGLVALLAS), 95–115 (LLTLALVNLLLSAACSMGLLL), and 163–183 (ALALWIPSLFMSAAEAALSGY).

The protein belongs to the TMEM54 family.

It is found in the membrane. The sequence is that of Keratinocyte-associated protein 3 (Krtcap3) from Mus musculus (Mouse).